Reading from the N-terminus, the 126-residue chain is MIVGVGVDVVDVPRFRAQLERTPALRARLFTEDERDLPLRSLAARFAAKEAIAKAMGAPPGMMWHHCWIPRPDHGDGRPTVHLTGTVQAQAEALGITHWHLSLSHDGDVATAYVVAERRAAEEESA.

2 residues coordinate Mg(2+): Asp-8 and Glu-50.

It belongs to the P-Pant transferase superfamily. AcpS family. It depends on Mg(2+) as a cofactor.

It is found in the cytoplasm. The enzyme catalyses apo-[ACP] + CoA = holo-[ACP] + adenosine 3',5'-bisphosphate + H(+). Functionally, transfers the 4'-phosphopantetheine moiety from coenzyme A to a Ser of acyl-carrier-protein. The chain is Holo-[acyl-carrier-protein] synthase from Micrococcus luteus (strain ATCC 4698 / DSM 20030 / JCM 1464 / CCM 169 / CCUG 5858 / IAM 1056 / NBRC 3333 / NCIMB 9278 / NCTC 2665 / VKM Ac-2230) (Micrococcus lysodeikticus).